Reading from the N-terminus, the 216-residue chain is Octanoyltransferase (216 aa).

In terms of domain architecture, BPL/LPL catalytic spans Asn-35 to Phe-213. Substrate is bound by residues Arg-77–His-84, Ser-144–Gly-146, and Gly-157–Ser-159. The active-site Acyl-thioester intermediate is Cys-175.

The protein belongs to the LipB family.

Its subcellular location is the cytoplasm. The enzyme catalyses octanoyl-[ACP] + L-lysyl-[protein] = N(6)-octanoyl-L-lysyl-[protein] + holo-[ACP] + H(+). It functions in the pathway protein modification; protein lipoylation via endogenous pathway; protein N(6)-(lipoyl)lysine from octanoyl-[acyl-carrier-protein]: step 1/2. Functionally, catalyzes the transfer of endogenously produced octanoic acid from octanoyl-acyl-carrier-protein onto the lipoyl domains of lipoate-dependent enzymes. Lipoyl-ACP can also act as a substrate although octanoyl-ACP is likely to be the physiological substrate. This chain is Octanoyltransferase, found in Prochlorococcus marinus (strain MIT 9301).